Reading from the N-terminus, the 504-residue chain is Maturase K (504 aa).

The protein belongs to the intron maturase 2 family. MatK subfamily.

It localises to the plastid. Its subcellular location is the chloroplast. In terms of biological role, usually encoded in the trnK tRNA gene intron. Probably assists in splicing its own and other chloroplast group II introns. The sequence is that of Maturase K from Quercus gemelliflora (Pasang hiris).